The primary structure comprises 217 residues: Probable disulfide bond formation protein D (217 aa).

Positions 1 to 28 (MKSSNKLMALGIVFSIAVLIVIGTIVYS) are cleaved as a signal peptide. Residues Cys-66 and Cys-69 are joined by a disulfide bond.

It belongs to the thioredoxin family. DsbA subfamily.

Its function is as follows. May be required for disulfide bond formation in some proteins. The polypeptide is Probable disulfide bond formation protein D (bdbD) (Bacillus anthracis).